A 361-amino-acid polypeptide reads, in one-letter code: Peptide chain release factor 1 (361 aa).

Gln-237 is modified (N5-methylglutamine).

The protein belongs to the prokaryotic/mitochondrial release factor family. In terms of processing, methylated by PrmC. Methylation increases the termination efficiency of RF1.

The protein localises to the cytoplasm. In terms of biological role, peptide chain release factor 1 directs the termination of translation in response to the peptide chain termination codons UAG and UAA. The chain is Peptide chain release factor 1 from Chromohalobacter salexigens (strain ATCC BAA-138 / DSM 3043 / CIP 106854 / NCIMB 13768 / 1H11).